The primary structure comprises 262 residues: Thrombin-like enzyme calobin-1 (262 aa).

Positions 1–18 (MVLISVLANLLILQLSYA) are cleaved as a signal peptide. Residues 19–24 (QKSSEL) constitute a propeptide that is removed on maturation. The region spanning 25–253 (VIGGDECNIN…HLDWIQSIIA (229 aa)) is the Peptidase S1 domain. 6 disulfide bridges follow: C31/C165, C52/C68, C100/C260, C144/C214, C176/C193, and C204/C229. H67 serves as the catalytic Charge relay system. The N-linked (GlcNAc...) asparagine glycan is linked to N105. D112 acts as the Charge relay system in catalysis. Catalysis depends on S208, which acts as the Charge relay system.

The protein belongs to the peptidase S1 family. Snake venom subfamily. Monomer. N-glycosylated. Expressed by the venom gland.

The protein resides in the secreted. With respect to regulation, strongly inhibited by PMSF, and moderately by benzamidine and soybean trypsin inhibitor. In terms of biological role, thrombin-like snake venom serine protease. Has a coagulant activity. Acts on alpha-chains of fibrinogen (FGA) generating fibrinopeptide A. This chain is Thrombin-like enzyme calobin-1, found in Gloydius ussuriensis (Ussuri mamushi).